The following is a 321-amino-acid chain: Malate dehydrogenase (321 aa).

NAD(+) contacts are provided by residues 10 to 15 and Asp34; that span reads GSGMIG. Positions 83 and 89 each coordinate substrate. NAD(+)-binding positions include Asn96 and 119-121; that span reads ITN. Substrate contacts are provided by Asn121 and Arg152. The Proton acceptor role is filled by His176.

This sequence belongs to the LDH/MDH superfamily. MDH type 3 family.

It carries out the reaction (S)-malate + NAD(+) = oxaloacetate + NADH + H(+). In terms of biological role, catalyzes the reversible oxidation of malate to oxaloacetate. This chain is Malate dehydrogenase, found in Sinorhizobium fredii (strain NBRC 101917 / NGR234).